A 160-amino-acid polypeptide reads, in one-letter code: Cytochrome b6-f complex subunit 4 (160 aa).

3 consecutive transmembrane segments (helical) span residues 36-56 (LLYIFPVVILGTIACNVGLAV), 95-115 (LLGVFLMVSVPAGLLTVPFLE), and 131-151 (TVFLIGTAVALWLGIGATLPI).

This sequence belongs to the cytochrome b family. PetD subfamily. In terms of assembly, the 4 large subunits of the cytochrome b6-f complex are cytochrome b6, subunit IV (17 kDa polypeptide, petD), cytochrome f and the Rieske protein, while the 4 small subunits are petG, petL, petM and petN. The complex functions as a dimer.

The protein resides in the plastid. It localises to the chloroplast thylakoid membrane. Component of the cytochrome b6-f complex, which mediates electron transfer between photosystem II (PSII) and photosystem I (PSI), cyclic electron flow around PSI, and state transitions. The sequence is that of Cytochrome b6-f complex subunit 4 from Gossypium barbadense (Sea Island cotton).